Consider the following 231-residue polypeptide: Chromosome partition protein MukE (231 aa).

Residues 204–231 (TPEPSQQSLLENPTAEYDEEQTEWEDEA) form a disordered region. A compositionally biased stretch (acidic residues) spans 219-231 (EYDEEQTEWEDEA).

It belongs to the MukE family. As to quaternary structure, interacts, and probably forms a ternary complex, with MukF and MukB. The complex formation is stimulated by calcium or magnesium.

It localises to the cytoplasm. It is found in the nucleoid. Functionally, involved in chromosome condensation, segregation and cell cycle progression. May participate in facilitating chromosome segregation by condensation DNA from both sides of a centrally located replisome during cell division. Probably acts via its interaction with MukB and MukF. This is Chromosome partition protein MukE from Vibrio cholerae serotype O1 (strain ATCC 39315 / El Tor Inaba N16961).